We begin with the raw amino-acid sequence, 1802 residues long: Non-reducing polyketide synthase nscA (1802 aa).

The interval Asp-27–His-261 is N-terminal acylcarrier protein transacylase domain (SAT). Residues Ser-396–Asp-829 enclose the Ketosynthase family 3 (KS3) domain. Residues Cys-569, His-704, and His-747 each act as for beta-ketoacyl synthase activity in the active site. The interval Phe-935–Arg-1235 is malonyl-CoA:ACP transacylase (MAT) domain. The interval Thr-1322–Pro-1641 is product template (PT) domain. The segment at His-1326–Ala-1462 is N-terminal hotdog fold. One can recognise a PKS/mFAS DH domain in the interval His-1326–Asp-1636. His-1358 acts as the Proton acceptor; for dehydratase activity in catalysis. Residues Ala-1490–Asp-1636 are C-terminal hotdog fold. Asp-1547 acts as the Proton donor; for dehydratase activity in catalysis. The disordered stretch occupies residues Leu-1699–Ser-1729. Positions Thr-1702–Pro-1713 are enriched in low complexity. A Carrier domain is found at Pro-1725 to Cys-1802. At Ser-1762 the chain carries O-(pantetheine 4'-phosphoryl)serine.

It depends on pantetheine 4'-phosphate as a cofactor.

Its pathway is secondary metabolite biosynthesis. Non-reducing polyketide synthase; part of the gene cluster that mediates the biosynthesis of neosartoricin B, a prenylated anthracenone that probably exhibits T-cell antiproliferative activity, suggestive of a physiological role as an immunosuppressive agent. The non-reducing polyketide synthase nscA probably synthesizes and cyclizes the decaketide backbone. The hydrolase nscB then mediates the product release through hydrolysis followed by spontaneous decarboxylation. The prenyltransferase nscD catalyzes the addition of the dimethylallyl group to the aromatic C5. The FAD-dependent monooxygenase nscC is then responsible for the stereospecific hydroxylation at C2. Neosartoricin B can be converted into two additional compounds neosartoricins C and D. Neosartoricin C is a spirocyclic compound that is cyclized through the attack of C3 hydroxyl on C14, followed by dehydration. On the other hand, neosartoricin D is a further cyclized compound in which attack of C2 on C14 in neosartoricin C results in the formation of the acetal-containing dioxabicyclo-octanone ring. Both of these compounds are novel and possibly represent related metabolites of the gene cluster. In Trichophyton tonsurans (strain CBS 112818) (Scalp ringworm fungus), this protein is Non-reducing polyketide synthase nscA.